The chain runs to 145 residues: Large ribosomal subunit protein uL13 (145 aa).

It belongs to the universal ribosomal protein uL13 family. Part of the 50S ribosomal subunit.

In terms of biological role, this protein is one of the early assembly proteins of the 50S ribosomal subunit, although it is not seen to bind rRNA by itself. It is important during the early stages of 50S assembly. The chain is Large ribosomal subunit protein uL13 from Bacillus mycoides (strain KBAB4) (Bacillus weihenstephanensis).